Consider the following 436-residue polypeptide: Gamma-glutamyl phosphate reductase (436 aa).

This sequence belongs to the gamma-glutamyl phosphate reductase family.

The protein resides in the cytoplasm. The enzyme catalyses L-glutamate 5-semialdehyde + phosphate + NADP(+) = L-glutamyl 5-phosphate + NADPH + H(+). The protein operates within amino-acid biosynthesis; L-proline biosynthesis; L-glutamate 5-semialdehyde from L-glutamate: step 2/2. In terms of biological role, catalyzes the NADPH-dependent reduction of L-glutamate 5-phosphate into L-glutamate 5-semialdehyde and phosphate. The product spontaneously undergoes cyclization to form 1-pyrroline-5-carboxylate. The protein is Gamma-glutamyl phosphate reductase of Prochlorococcus marinus (strain MIT 9312).